We begin with the raw amino-acid sequence, 504 residues long: Facilitated trehalose transporter Tret1 (504 aa).

At 1 to 39 (MELNNKEDSPRHTVPFVRQITEDGKAKLEIYRPTTNPIY) the chain is on the cytoplasmic side. Residues 40–60 (IYTQILAAIAVSMGSMVVGFA) traverse the membrane as a helical segment. The Extracellular portion of the chain corresponds to 61-87 (SAYTSPALVSMQNTTITSFKVTEQEAS). A glycan (N-linked (GlcNAc...) asparagine) is linked at Asn73. The chain crosses the membrane as a helical span at residues 88-108 (WVGGIMPLAGLAGGIAGGPFI). At 109–120 (EYLGRKNTILAT) the chain is on the cytoplasmic side. A helical transmembrane segment spans residues 121-141 (AVPFIVAWLLIAFANSIWMVL). Topologically, residues 142–145 (AGRA) are extracellular. The chain crosses the membrane as a helical span at residues 146 to 166 (LSGFCVGIASLSLPVYLGETV). Over 167-171 (QPEVR) the chain is Cytoplasmic. A helical transmembrane segment spans residues 172-192 (GTLGLLPTAFGNIGILICFVA). At 193–199 (GKYVNWS) the chain is on the extracellular side. N-linked (GlcNAc...) asparagine glycosylation is present at Asn197. The helical transmembrane segment at 200–220 (GLAFIGSILPIPFMVLTLLIP) threads the bilayer. Over 221 to 283 (ETPRWFVTRG…DLMKRSNLKP (63 aa)) the chain is Cytoplasmic. Residues 284–304 (LLIALGLMFFQQLSGINAVIF) form a helical membrane-spanning segment. At 305-320 (YTVSIFKDAGSTIDEN) the chain is on the extracellular side. The chain crosses the membrane as a helical span at residues 321-341 (LCTIIVGVVNFGATFFATVLI). Topologically, residues 342-347 (DRLGRK) are cytoplasmic. Residues 348–368 (ILLYISEVAMVITLLTLGTFF) form a helical membrane-spanning segment. The Extracellular portion of the chain corresponds to 369–387 (YYKNSGNDVSNIGWLPLAS). Residues 388–408 (FVIYVIGFSSGVGPIPWLMLG) traverse the membrane as a helical segment. At 409–424 (EILPGKIRGSAASVAT) the chain is on the cytoplasmic side. The chain crosses the membrane as a helical span at residues 425 to 445 (GFNWTCTFIVTKTFADIVAAI). The Extracellular segment spans residues 446 to 448 (GNH). The chain crosses the membrane as a helical span at residues 449–469 (GAFWFFGVICLIGLFFVIFFV). Topologically, residues 470–504 (PETQGKSLEEIERKMMGRVRRMSSVANMKPLSFNM) are cytoplasmic.

Belongs to the major facilitator superfamily. Sugar transporter (TC 2.A.1.1) family. Trehalose transporter subfamily. As to expression, highest expression in the fat body. Not expressed in other tissues including the midgut, muscle, and integuments after 24 hours of dehydration.

It localises to the cell membrane. High-capacity facilitative transporter for trehalose, required to induce anhydrobiosis. Anhydrobiotic larvae can survive almost complete dehydration. Does not transport maltose, sucrose or lactose. Mediates the bidirectional transfer of trehalose. Responsible for the transport of trehalose synthesized in the fat body and the incorporation of trehalose into other tissues that require a carbon source, thereby regulating trehalose levels in the hemolymph. This chain is Facilitated trehalose transporter Tret1, found in Polypedilum vanderplanki (Sleeping chironomid midge).